The sequence spans 411 residues: Bifunctional protein GlmU (411 aa).

A pyrophosphorylase region spans residues 1–204 (MDAIILCAGK…NGKLHGIELN (204 aa)). UTP-binding positions include 6–9 (LCAG), Q74, and G79. N-acetyl-alpha-D-glucosamine 1-phosphate-binding residues include T80, G130, N142, and N158. The tract at residues 205–224 (GYWNDIGHPWDVLSANNRFL) is linker. An N-acetyltransferase region spans residues 225 to 411 (NKIISKVSGK…DELVITKKRN (187 aa)). H308 (proton acceptor) is an active-site residue. Acetyl-CoA is bound by residues A384 and K401.

This sequence in the N-terminal section; belongs to the N-acetylglucosamine-1-phosphate uridyltransferase family. In the C-terminal section; belongs to the transferase hexapeptide repeat family.

The enzyme catalyses N-acetyl-alpha-D-glucosamine 1-phosphate + UTP + H(+) = UDP-N-acetyl-alpha-D-glucosamine + diphosphate. It carries out the reaction alpha-D-glucosamine 1-phosphate + acetyl-CoA = N-acetyl-alpha-D-glucosamine 1-phosphate + CoA + H(+). The protein operates within nucleotide-sugar biosynthesis; UDP-N-acetyl-alpha-D-glucosamine biosynthesis; N-acetyl-alpha-D-glucosamine 1-phosphate from alpha-D-glucosamine 6-phosphate (route II): step 2/2. Its pathway is nucleotide-sugar biosynthesis; UDP-N-acetyl-alpha-D-glucosamine biosynthesis; UDP-N-acetyl-alpha-D-glucosamine from N-acetyl-alpha-D-glucosamine 1-phosphate: step 1/1. Functionally, catalyzes the last two sequential reactions in the de novo biosynthetic pathway for UDP-N-acetyl-glucosamine (UDP-GlcNAc). Responsible for the acetylation of GlcN-1-P to GlcNAc-1-P, and for the uridyl transfer from UTP to GlcNAc-1-P, to produce UDP-GlcNAc and pyrophosphate. The polypeptide is Bifunctional protein GlmU (Methanococcus maripaludis (strain C7 / ATCC BAA-1331)).